The chain runs to 373 residues: Spermidine/putrescine import ATP-binding protein PotA (373 aa).

The region spanning 6–236 (LSLSNLTKQF…PANLFTARFV (231 aa)) is the ABC transporter domain. 38–45 (GPSGCGKT) serves as a coordination point for ATP.

It belongs to the ABC transporter superfamily. Spermidine/putrescine importer (TC 3.A.1.11.1) family. The complex is composed of two ATP-binding proteins (PotA), two transmembrane proteins (PotB and PotC) and a solute-binding protein (PotD).

It localises to the cell inner membrane. It catalyses the reaction ATP + H2O + polyamine-[polyamine-binding protein]Side 1 = ADP + phosphate + polyamineSide 2 + [polyamine-binding protein]Side 1.. Its function is as follows. Part of the ABC transporter complex PotABCD involved in spermidine/putrescine import. Responsible for energy coupling to the transport system. The protein is Spermidine/putrescine import ATP-binding protein PotA of Marinobacter nauticus (strain ATCC 700491 / DSM 11845 / VT8) (Marinobacter aquaeolei).